The sequence spans 172 residues: Shikimate kinase (172 aa).

11 to 16 (GSGKTT) provides a ligand contact to ATP. Residue T15 participates in Mg(2+) binding. Positions 33, 57, and 79 each coordinate substrate. ATP is bound at residue R117. R136 contacts substrate.

Belongs to the shikimate kinase family. In terms of assembly, monomer. It depends on Mg(2+) as a cofactor.

The protein resides in the cytoplasm. It catalyses the reaction shikimate + ATP = 3-phosphoshikimate + ADP + H(+). Its pathway is metabolic intermediate biosynthesis; chorismate biosynthesis; chorismate from D-erythrose 4-phosphate and phosphoenolpyruvate: step 5/7. Functionally, catalyzes the specific phosphorylation of the 3-hydroxyl group of shikimic acid using ATP as a cosubstrate. This chain is Shikimate kinase, found in Caldicellulosiruptor saccharolyticus (strain ATCC 43494 / DSM 8903 / Tp8T 6331).